The primary structure comprises 81 residues: Protein Vpu (81 aa).

Residues 1 to 7 (MQPSQII) are Extracellular-facing. The chain crosses the membrane as a helical span at residues 8–28 (AIAALVVAAIIAIVVWTIVFI). The Cytoplasmic segment spans residues 29 to 81 (EYRRIKRQRKIDCIIDRIRERAEDSGNESEGDREELSKLVEMGHHAPWDIDDL). Phosphoserine; by host CK2 is present on residues S53 and S57.

Belongs to the HIV-1 VPU protein family. As to quaternary structure, homopentamer. Interacts with host CD4 and BRTC; these interactions induce proteasomal degradation of CD4. Interacts with host BST2; this interaction leads to the degradation of host BST2. Interacts with host FBXW11. Interacts with host AP1M1; this interaction plays a role in the mistrafficking and subsequent degradation of host BST2. Interacts with host RANBP2; this interaction allows Vpu to down-regulate host BLM sumoylation. Phosphorylated by host CK2. This phosphorylation is necessary for interaction with human BTRC and degradation of CD4.

The protein resides in the host membrane. With respect to regulation, ion channel activity is inhibited by hexamethylene amiloride in vitro. In terms of biological role, enhances virion budding by targeting host CD4 and Tetherin/BST2 to proteasome degradation. Degradation of CD4 prevents any unwanted premature interactions between viral Env and its host receptor CD4 in the endoplasmic reticulum. Degradation of antiretroviral protein Tetherin/BST2 is important for virion budding, as BST2 tethers new viral particles to the host cell membrane. Mechanistically, Vpu bridges either CD4 or BST2 to BTRC, a substrate recognition subunit of the Skp1/Cullin/F-box protein E3 ubiquitin ligase, induces their ubiquitination and subsequent proteasomal degradation. The alteration of the E3 ligase specificity by Vpu seems to promote the degradation of host IKBKB, leading to NF-kappa-B down-regulation and subsequent apoptosis. Acts as a viroporin that forms an oligomeric ion channel in membranes. Modulates the host DNA repair mechanisms to promote degradation of nuclear viral cDNA in cells that are already productively infected in order to suppress immune sensing and proviral hyper-integration (superinfection). Manipulates PML-NBs and modulates SUMOylation of host BLM protein thereby enhancing its DNA-end processing activity toward viral unintegrated linear DNA. Also inhibits RAD52-mediated homologous repair of viral cDNA, preventing the generation of dead-end circular forms of single copies of the long terminal repeat and permitting sustained nucleolytic attack. In Homo sapiens (Human), this protein is Protein Vpu.